Consider the following 307-residue polypeptide: UDP-N-acetylenolpyruvoylglucosamine reductase (307 aa).

The FAD-binding PCMH-type domain maps to 34–199 (RVGGPAQVLF…TAVRFRGTPS (166 aa)). Residue R179 is part of the active site. The active-site Proton donor is S228. Residue E298 is part of the active site.

The protein belongs to the MurB family. The cofactor is FAD.

It localises to the cytoplasm. It catalyses the reaction UDP-N-acetyl-alpha-D-muramate + NADP(+) = UDP-N-acetyl-3-O-(1-carboxyvinyl)-alpha-D-glucosamine + NADPH + H(+). Its pathway is cell wall biogenesis; peptidoglycan biosynthesis. Cell wall formation. The polypeptide is UDP-N-acetylenolpyruvoylglucosamine reductase (Bradyrhizobium sp. (strain ORS 278)).